The following is a 152-amino-acid chain: Protein-export protein SecB (152 aa).

It belongs to the SecB family. As to quaternary structure, homotetramer, a dimer of dimers. One homotetramer interacts with 1 SecA dimer.

Its subcellular location is the cytoplasm. In terms of biological role, one of the proteins required for the normal export of preproteins out of the cell cytoplasm. It is a molecular chaperone that binds to a subset of precursor proteins, maintaining them in a translocation-competent state. It also specifically binds to its receptor SecA. The sequence is that of Protein-export protein SecB from Rickettsia conorii (strain ATCC VR-613 / Malish 7).